Here is a 143-residue protein sequence, read N- to C-terminus: MKSYMAKPNEVERKWYVVDAEGKTLGRLSSEIATILRGKNKPEFTPHVDTGDFVIVVNAEKVALTGKKLDQSFYTYHTGHPGGLRQVSFRRLLAEKPESLVYNAVKGMLPKTRLGRQMLTKLKVYAGPNHKHEAQQPEALELL.

This sequence belongs to the universal ribosomal protein uL13 family. Part of the 50S ribosomal subunit.

Functionally, this protein is one of the early assembly proteins of the 50S ribosomal subunit, although it is not seen to bind rRNA by itself. It is important during the early stages of 50S assembly. This chain is Large ribosomal subunit protein uL13, found in Alkaliphilus oremlandii (strain OhILAs) (Clostridium oremlandii (strain OhILAs)).